Here is a 131-residue protein sequence, read N- to C-terminus: MDKNLLEAVKFDEKGLVCAIAQDAETKRILMVAWMNAEALQKTVETGFAHYYSRSRQKQWMKGEESGHTQKVRELRLDCDGDAIVMLIAQNGGIACHTGRESCFYKVWRGGAWETADAVLKDEKEIYGSTH.

D78 contributes to the Mg(2+) binding site. C79 serves as a coordination point for Zn(2+). Mg(2+)-binding residues include D80 and D82. C96 and C103 together coordinate Zn(2+).

This sequence belongs to the PRA-CH family. Homodimer. Mg(2+) is required as a cofactor. Zn(2+) serves as cofactor.

The protein localises to the cytoplasm. It catalyses the reaction 1-(5-phospho-beta-D-ribosyl)-5'-AMP + H2O = 1-(5-phospho-beta-D-ribosyl)-5-[(5-phospho-beta-D-ribosylamino)methylideneamino]imidazole-4-carboxamide. It functions in the pathway amino-acid biosynthesis; L-histidine biosynthesis; L-histidine from 5-phospho-alpha-D-ribose 1-diphosphate: step 3/9. Its function is as follows. Catalyzes the hydrolysis of the adenine ring of phosphoribosyl-AMP. The sequence is that of Phosphoribosyl-AMP cyclohydrolase from Neisseria meningitidis serogroup A / serotype 4A (strain DSM 15465 / Z2491).